The sequence spans 378 residues: GTP 3',8-cyclase 3 (378 aa).

Positions 40–259 constitute a Radical SAM core domain; the sequence is RCGRTMGDLR…STLGKKYGPI (220 aa). GTP is bound at residue Arg-49. The [4Fe-4S] cluster site is built by Cys-56 and Cys-60. Tyr-62 is a binding site for S-adenosyl-L-methionine. Cys-63 serves as a coordination point for [4Fe-4S] cluster. Arg-99 contacts GTP. Gly-103 contributes to the S-adenosyl-L-methionine binding site. Thr-134 provides a ligand contact to GTP. Position 158 (Ser-158) interacts with S-adenosyl-L-methionine. Lys-195 serves as a coordination point for GTP. S-adenosyl-L-methionine is bound at residue Met-229. 2 residues coordinate [4Fe-4S] cluster: Cys-292 and Cys-295. 297–299 contacts GTP; that stretch reads RSR. [4Fe-4S] cluster is bound at residue Cys-309.

This sequence belongs to the radical SAM superfamily. MoaA family. In terms of assembly, monomer and homodimer. [4Fe-4S] cluster serves as cofactor.

It catalyses the reaction GTP + AH2 + S-adenosyl-L-methionine = (8S)-3',8-cyclo-7,8-dihydroguanosine 5'-triphosphate + 5'-deoxyadenosine + L-methionine + A + H(+). Its pathway is cofactor biosynthesis; molybdopterin biosynthesis. Its function is as follows. Catalyzes the cyclization of GTP to (8S)-3',8-cyclo-7,8-dihydroguanosine 5'-triphosphate. The sequence is that of GTP 3',8-cyclase 3 from Mycobacterium bovis (strain ATCC BAA-935 / AF2122/97).